Consider the following 61-residue polypeptide: Small ribosomal subunit protein uS14 (61 aa).

The Zn(2+) site is built by C24, C27, C40, and C43.

Belongs to the universal ribosomal protein uS14 family. Zinc-binding uS14 subfamily. In terms of assembly, part of the 30S ribosomal subunit. Contacts proteins S3 and S10. Zn(2+) is required as a cofactor.

Functionally, binds 16S rRNA, required for the assembly of 30S particles and may also be responsible for determining the conformation of the 16S rRNA at the A site. The sequence is that of Small ribosomal subunit protein uS14 from Parafrankia sp. (strain EAN1pec).